The sequence spans 306 residues: N-acetylmuramic acid/N-acetylglucosamine kinase (306 aa).

Residue S12 participates in ATP binding. Substrate is bound at residue N35. T124 is an ATP binding site. Substrate is bound by residues 142-144 (GWG) and D149. A208 is a binding site for ATP.

It belongs to the eukaryotic-type N-acetylglucosamine kinase family. Mg(2+) is required as a cofactor.

The protein resides in the cytoplasm. It carries out the reaction N-acetyl-D-glucosamine + ATP = N-acetyl-D-glucosamine 6-phosphate + ADP + H(+). The catalysed reaction is N-acetyl-D-muramate + ATP = N-acetyl-D-muramate 6-phosphate + ADP + H(+). It functions in the pathway cell wall biogenesis; peptidoglycan recycling. In terms of biological role, catalyzes the ATP-dependent phosphorylation of both cell wall (peptidoglycan) amino sugars, N-acetylmuramic acid (MurNAc) and N-acetylglucosamine (GlcNAc), at the 6-hydroxyl group. Neither the non-N-acetylated forms of the cell wall sugars, i.e., glucosamine and/or muramic acid, nor epimeric hexoses or 1,6-anhydro-MurNAc are substrates for the enzyme. May have a role in the rescue of the murein sugars GlcNAc and MurNAc released from muropeptides during cell wall turnover in C.acetobutylicum. The sequence is that of N-acetylmuramic acid/N-acetylglucosamine kinase from Clostridium acetobutylicum (strain ATCC 824 / DSM 792 / JCM 1419 / IAM 19013 / LMG 5710 / NBRC 13948 / NRRL B-527 / VKM B-1787 / 2291 / W).